Here is a 199-residue protein sequence, read N- to C-terminus: NAD(P)H dehydrogenase (quinone) (199 aa).

In terms of domain architecture, Flavodoxin-like spans 4 to 190 (VLVLYYSSYG…EGARHQGELV (187 aa)). FMN is bound by residues 10-15 (SSYGHI) and 78-80 (TRY). Tyrosine 12 provides a ligand contact to NAD(+). Residue tryptophan 98 coordinates substrate. Residues 113–119 (STATQHG) and histidine 134 each bind FMN.

The protein belongs to the WrbA family. The cofactor is FMN.

It carries out the reaction a quinone + NADH + H(+) = a quinol + NAD(+). The catalysed reaction is a quinone + NADPH + H(+) = a quinol + NADP(+). The polypeptide is NAD(P)H dehydrogenase (quinone) (Paraburkholderia phymatum (strain DSM 17167 / CIP 108236 / LMG 21445 / STM815) (Burkholderia phymatum)).